The chain runs to 241 residues: 2-C-methyl-D-erythritol 4-phosphate cytidylyltransferase (241 aa).

Belongs to the IspD/TarI cytidylyltransferase family. IspD subfamily. In terms of assembly, homodimer.

The enzyme catalyses 2-C-methyl-D-erythritol 4-phosphate + CTP + H(+) = 4-CDP-2-C-methyl-D-erythritol + diphosphate. It functions in the pathway isoprenoid biosynthesis; isopentenyl diphosphate biosynthesis via DXP pathway; isopentenyl diphosphate from 1-deoxy-D-xylulose 5-phosphate: step 2/6. Functionally, catalyzes the formation of 4-diphosphocytidyl-2-C-methyl-D-erythritol from CTP and 2-C-methyl-D-erythritol 4-phosphate (MEP). This Yersinia pseudotuberculosis serotype IB (strain PB1/+) protein is 2-C-methyl-D-erythritol 4-phosphate cytidylyltransferase.